Here is a 503-residue protein sequence, read N- to C-terminus: AMP phosphorylase (503 aa).

AMP contacts are provided by residues Gly168, 194–199, and Thr203; that span reads SRAITS. Asp256 functions as the Proton donor in the catalytic mechanism. AMP is bound by residues Ser264 and Lys288.

Belongs to the thymidine/pyrimidine-nucleoside phosphorylase family. Type 2 subfamily.

The enzyme catalyses AMP + phosphate = alpha-D-ribose 1,5-bisphosphate + adenine. The catalysed reaction is CMP + phosphate = cytosine + alpha-D-ribose 1,5-bisphosphate. It carries out the reaction UMP + phosphate = alpha-D-ribose 1,5-bisphosphate + uracil. Catalyzes the conversion of AMP and phosphate to adenine and ribose 1,5-bisphosphate (R15P). Exhibits phosphorylase activity toward CMP and UMP in addition to AMP. Functions in an archaeal AMP degradation pathway, together with R15P isomerase and RubisCO. The polypeptide is AMP phosphorylase (deoA) (Pyrococcus abyssi (strain GE5 / Orsay)).